Here is a 164-residue protein sequence, read N- to C-terminus: Ribosome maturation factor RimP (164 aa).

This sequence belongs to the RimP family.

It localises to the cytoplasm. Required for maturation of 30S ribosomal subunits. The polypeptide is Ribosome maturation factor RimP (Mycoplasma mycoides subsp. mycoides SC (strain CCUG 32753 / NCTC 10114 / PG1)).